We begin with the raw amino-acid sequence, 367 residues long: Phosphoglycerate kinase (367 aa).

(2R)-3-phosphoglycerate contacts are provided by Val1, Asp2, Phe3, Asn4, Arg17, Ser40, His41, Gly43, Arg44, Leu98, Arg99, His146, and Arg147. Gly190 is an ADP binding site. Gly190 lines the CDP pocket. Ala191 and Lys192 together coordinate AMP. Ala191 provides a ligand contact to ATP. Ala191 is a Mg(2+) binding site. Positions 194 and 195 each coordinate Mg(2+). Asp195 lines the CDP pocket. An AMP-binding site is contributed by Lys196. Residue Lys196 participates in ATP binding. Residue Gly214 participates in ADP binding. A CDP-binding site is contributed by Gly214. Positions 215 and 289 each coordinate AMP. Positions 215 and 289 each coordinate ATP. Positions 314 and 319 each coordinate CDP. Phe319 is an ADP binding site. Glu320 is an AMP binding site. ATP contacts are provided by Glu320, Asp351, and Thr352. Asp351 is a Mg(2+) binding site.

This sequence belongs to the phosphoglycerate kinase family. Monomer. The cofactor is Mg(2+).

It catalyses the reaction (2R)-3-phosphoglycerate + ATP = (2R)-3-phospho-glyceroyl phosphate + ADP. Its pathway is carbohydrate degradation; glycolysis; pyruvate from D-glyceraldehyde 3-phosphate: step 2/5. This chain is Phosphoglycerate kinase (PGK), found in Paramecium primaurelia.